Here is a 198-residue protein sequence, read N- to C-terminus: IMP cyclohydrolase (198 aa).

The protein belongs to the archaeal IMP cyclohydrolase family.

The catalysed reaction is IMP + H2O = 5-formamido-1-(5-phospho-D-ribosyl)imidazole-4-carboxamide. It participates in purine metabolism; IMP biosynthesis via de novo pathway; IMP from 5-formamido-1-(5-phospho-D-ribosyl)imidazole-4-carboxamide: step 1/1. Catalyzes the cyclization of 5-formylamidoimidazole-4-carboxamide ribonucleotide to IMP. The protein is IMP cyclohydrolase of Thermococcus kodakarensis (strain ATCC BAA-918 / JCM 12380 / KOD1) (Pyrococcus kodakaraensis (strain KOD1)).